A 100-amino-acid polypeptide reads, in one-letter code: Putative antiporter subunit mnhF2 (100 aa).

Transmembrane regions (helical) follow at residues 5-25 (FTQIFIISALVIFGMALLVCL), 38-60 (VVSFDASSAVVMSIVGVMSVIFN), and 65-87 (LDSIMLIAIISFVSSVSISRFIG).

This sequence belongs to the CPA3 antiporters (TC 2.A.63) subunit F family. May form a heterooligomeric complex that consists of seven subunits: mnhA2, mnhB2, mnhC2, mnhD2, mnhE2, mnhF2 and mnhG2.

It is found in the cell membrane. The protein is Putative antiporter subunit mnhF2 (mnhF2) of Staphylococcus epidermidis (strain ATCC 35984 / DSM 28319 / BCRC 17069 / CCUG 31568 / BM 3577 / RP62A).